The chain runs to 384 residues: Interstitial collagenase (384 aa).

A signal peptide spans 1–25 (MLSGLWSSILALLGVFLQSVGEFRA). Residues 26-88 (ETQEQDVEIV…STCGVPDVGE (63 aa)) constitute a propeptide, activation peptide. A Cysteine switch motif is present at residues 79 to 86 (STCGVPDV). Cys-81 provides a ligand contact to Zn(2+). Positions 113 and 129 each coordinate Ca(2+). His-139 and Asp-141 together coordinate Zn(2+). Positions 146, 147, 149, and 151 each coordinate Ca(2+). His-154 lines the Zn(2+) pocket. 3 residues coordinate Ca(2+): Gly-161, Gly-163, and Asp-165. His-167 lines the Zn(2+) pocket. Ca(2+) contacts are provided by Asp-169, Glu-170, and Glu-172. Position 189 (His-189) interacts with Zn(2+). Glu-190 is a catalytic residue. Residues His-193 and His-199 each contribute to the Zn(2+) site. Positions 218–239 (LSQDDIDGPSGNPVQPRGPQTP) are disordered. Residues Cys-242 and Cys-381 are joined by a disulfide bond. 3 residues coordinate Ca(2+): Asp-249, Gln-277, and Asp-347. 2 Hemopexin repeats span residues 273 to 319 (ELGL…FGFP) and 333 to 381 (KQSM…WFNC).

The protein belongs to the peptidase M10A family. It depends on Ca(2+) as a cofactor. The cofactor is Zn(2+).

It is found in the secreted. It localises to the extracellular space. The protein resides in the extracellular matrix. The catalysed reaction is Cleavage of the triple helix of collagen at about three-quarters of the length of the molecule from the N-terminus, at 775-Gly-|-Ile-776 in the alpha1(I) chain. Cleaves synthetic substrates and alpha-macroglobulins at bonds where P1' is a hydrophobic residue.. Can be activated without removal of the activation peptide. Its function is as follows. Cleaves collagens of types I, II, and III at one site in the helical domain. Also cleaves collagens of types VII and X. The chain is Interstitial collagenase from Aquarana catesbeiana (American bullfrog).